A 260-amino-acid polypeptide reads, in one-letter code: Ribosomal protein L11 methyltransferase (260 aa).

S-adenosyl-L-methionine-binding residues include Thr-119, Gly-140, Asp-162, and Asn-203.

It belongs to the methyltransferase superfamily. PrmA family.

Its subcellular location is the cytoplasm. It carries out the reaction L-lysyl-[protein] + 3 S-adenosyl-L-methionine = N(6),N(6),N(6)-trimethyl-L-lysyl-[protein] + 3 S-adenosyl-L-homocysteine + 3 H(+). Its function is as follows. Methylates ribosomal protein L11. The sequence is that of Ribosomal protein L11 methyltransferase from Thermosipho africanus (strain TCF52B).